The following is a 237-amino-acid chain: DCN1-like protein 5 (237 aa).

3 positions are modified to phosphoserine: Ser-9, Ser-41, and Ser-48. The DCUN1 domain maps to 46-232 (FSSKKCLAWF…LLDEFVEWQK (187 aa)).

In terms of assembly, part of a complex that contains DCUN1D5, CUL1 and RBX1; this interaction is bridged by CUL1. Interacts (via the DCUN1 domain) with the unneddylated cullins: interacts with CUL1, CUL2, CUL3, CUL4A, CUL4B and CUL5; these interactions promote the cullin neddylation and the identity of the cullin dictates the affinity of the interaction. Interacts (via DCUN1 domain) with UBE2M (N-terminally acetylated form) and probably with UBE2F (N-terminally acetylated form). May also interact with regulators or subunits of cullin-RING ligases such as RBX1, RNF7, ELOB and DDB1; these interactions are bridged by cullins. Interacts with CAND1; this interaction is bridged by cullins and strongly inhibits the neddylation of cullins. These CAND-cullin-DCNL complexes can only be neddylated in the presence of a substrate adapter. Phosphorylation at Ser-41 is independent of cullin's interaction. Phosphorylated in response to both TICAM1 and MYD88 dependent Toll-like receptor (TLR) pathway activation. Phosphorylated in response to IL1B stimulation. As to expression, weakly expressed in testis, skin and immune tissues (thymus, spleen and lymph nodes).

It localises to the nucleus. The protein localises to the cytoplasm. It is found in the cytoskeleton. Its subcellular location is the spindle. Functionally, contributes to the neddylation of all cullins by transferring NEDD8 from N-terminally acetylated NEDD8-conjugating E2s enzyme to different cullin C-terminal domain-RBX complexes which is necessary for the activation of cullin-RING E3 ubiquitin ligases (CRLs). May play a role in DNA damage response and may participate in cell proliferation and anchorage-independent cell growth. This chain is DCN1-like protein 5, found in Homo sapiens (Human).